The following is a 136-amino-acid chain: Translation initiation factor 5A (136 aa).

At Lys37 the chain carries Hypusine.

This sequence belongs to the eIF-5A family.

It is found in the cytoplasm. In terms of biological role, functions by promoting the formation of the first peptide bond. This Thermococcus onnurineus (strain NA1) protein is Translation initiation factor 5A (eIF5A).